Consider the following 317-residue polypeptide: L-lactate dehydrogenase (317 aa).

Residues Val-17, Asp-38, Lys-43, Tyr-68, and 82–83 (GV) each bind NAD(+). Arg-91 serves as a coordination point for substrate. NAD(+) contacts are provided by residues Ser-104, 121–123 (VSN), and Ser-146. Position 123–126 (123–126 (NPVD)) interacts with substrate. A substrate-binding site is contributed by 151–154 (DTSR). 2 residues coordinate beta-D-fructose 1,6-bisphosphate: Lys-156 and His-171. His-178 acts as the Proton acceptor in catalysis. Tyr-224 is subject to Phosphotyrosine. Residue Thr-233 participates in substrate binding.

This sequence belongs to the LDH/MDH superfamily. LDH family. As to quaternary structure, homotetramer.

The protein resides in the cytoplasm. The enzyme catalyses (S)-lactate + NAD(+) = pyruvate + NADH + H(+). The protein operates within fermentation; pyruvate fermentation to lactate; (S)-lactate from pyruvate: step 1/1. Allosterically activated by fructose 1,6-bisphosphate (FBP). In terms of biological role, catalyzes the conversion of lactate to pyruvate. The sequence is that of L-lactate dehydrogenase from Clostridium perfringens (strain ATCC 13124 / DSM 756 / JCM 1290 / NCIMB 6125 / NCTC 8237 / Type A).